Consider the following 121-residue polypeptide: Nitrogen fixation nifHD region glnB-like protein 2 (121 aa).

It belongs to the P(II) protein family.

Could be involved in the regulation of nitrogen fixation. The sequence is that of Nitrogen fixation nifHD region glnB-like protein 2 (glnBII) from Methanococcus maripaludis (Methanococcus deltae).